The following is a 195-amino-acid chain: Nicotinamide riboside kinase 2 (195 aa).

9-17 (GVTNGGKTT) contacts ATP. Mg(2+) is bound by residues Thr16 and Asp35. Catalysis depends on Asp35, which acts as the Proton acceptor. Residues 35 to 38 (DDFF) and 54 to 55 (WD) each bind substrate. Arg130 lines the ATP pocket. Substrate-binding positions include Arg131 and 136 to 137 (YM). ATP-binding positions include 134 to 136 (RTY) and 174 to 176 (KSP).

Belongs to the uridine kinase family. NRK subfamily. As to quaternary structure, monomer. Interacts with ITGB1 alone or when associated with alpha-7, but not with alpha-5. In terms of tissue distribution, expressed in skeletal muscle (at protein level).

The catalysed reaction is beta-nicotinamide D-riboside + ATP = beta-nicotinamide D-ribonucleotide + ADP + H(+). It catalyses the reaction beta-D-ribosylnicotinate + ATP = nicotinate beta-D-ribonucleotide + ADP + H(+). It participates in cofactor biosynthesis; NAD(+) biosynthesis. Its function is as follows. Catalyzes the phosphorylation of nicotinamide riboside (NR) and nicotinic acid riboside (NaR) to form nicotinamide mononucleotide (NMN) and nicotinic acid mononucleotide (NaMN). Reduces laminin matrix deposition and cell adhesion to laminin, but not to fibronectin. Involved in the regulation of PXN at the protein level and of PXN tyrosine phosphorylation. May play a role in the regulation of terminal myogenesis. The chain is Nicotinamide riboside kinase 2 (Nmrk2) from Mus musculus (Mouse).